The primary structure comprises 213 residues: Kynurenine formamidase (213 aa).

Trp18 provides a ligand contact to substrate. The Zn(2+) site is built by His48, His52, and Asp54. The active-site Proton donor/acceptor is the His58. His160 and Glu172 together coordinate Zn(2+).

Belongs to the Cyclase 1 superfamily. KynB family. Homodimer. Zn(2+) is required as a cofactor.

The catalysed reaction is N-formyl-L-kynurenine + H2O = L-kynurenine + formate + H(+). Its pathway is amino-acid degradation; L-tryptophan degradation via kynurenine pathway; L-kynurenine from L-tryptophan: step 2/2. Functionally, catalyzes the hydrolysis of N-formyl-L-kynurenine to L-kynurenine, the second step in the kynurenine pathway of tryptophan degradation. The chain is Kynurenine formamidase from Burkholderia ambifaria (strain MC40-6).